The primary structure comprises 461 residues: MWQFRIFLLFASTWGISGVSAHPDPVFSSSEGAHQVLRVRRANSFLEEVRAGSLERECMEEICDFEEAQEIFQNVEDTLAFWIKYFDGDQCSTPPLDHQCDSPCCGHGTCIDGLGGFSCSCDKGWEGRFCQQEMGFQDCRVKNGGCYHYCLEETRGRRCRCAPGYELADDHMHCRPTVNFPCGKLWKRTDKKRKNFKRDIDPEDEELELGPRIVNGTLTKQGDSPWQAILLDSKKKLACGGVLIHTSWVLTAAHCLESSKKLTVRLGEYDLRRRDPWELDLDIKEVLVHPNYTRSNSDNDIALLRLSQPATLSKTIVPICLPNSGLAQELSQAGQETVVTGWGYQSDKVKDGRRNRTFILTFIRIPLAARNDCMQVMNNVVSENMLCAGIIGDTRDACDGDSGGPMVVFFRGTWFLVGLVSWGEGCGHLNNYGVYTKVGSYLKWIHSYIGERDVSLKSPKL.

Residues 1–18 form the signal peptide; it reads MWQFRIFLLFASTWGISG. A propeptide spanning residues 19–41 is cleaved from the precursor; sequence VSAHPDPVFSSSEGAHQVLRVRR. The 46-residue stretch at 42–87 folds into the Gla domain; that stretch reads ANSFLEEVRAGSLERECMEEICDFEEAQEIFQNVEDTLAFWIKYFD. Residues Glu-47, Glu-48, Glu-55, Glu-57, Glu-60, Glu-61, Glu-66, Glu-67, Glu-70, and Glu-76 each carry the 4-carboxyglutamate modification. Cys-58 and Cys-63 are oxidised to a cystine. Disulfide bonds link Cys-91–Cys-110, Cys-100–Cys-105, Cys-104–Cys-119, Cys-121–Cys-130, Cys-139–Cys-150, Cys-146–Cys-159, Cys-161–Cys-174, Cys-182–Cys-320, and Cys-239–Cys-255. 2 consecutive EGF-like domains span residues 96–131 and 135–175; these read LDHQ…RFCQ and GFQD…MHCR. Asp-112 is modified ((3R)-3-hydroxyaspartate). Positions 213–450 constitute a Peptidase S1 domain; it reads IVNGTLTKQG…YLKWIHSYIG (238 aa). Residue Asn-215 is glycosylated (N-linked (GlcNAc...) asparagine). His-254 functions as the Charge relay system in the catalytic mechanism. Asn-291 carries N-linked (GlcNAc...) asparagine glycosylation. Asp-300 (charge relay system) is an active-site residue. An N-linked (GlcNAc...) asparagine glycan is attached at Asn-355. Cystine bridges form between Cys-373-Cys-387 and Cys-398-Cys-426. Ser-402 (charge relay system) is an active-site residue.

Belongs to the peptidase S1 family. Synthesized as a single chain precursor, which is cleaved into a light chain and a heavy chain held together by a disulfide bond. The enzyme is then activated by thrombin, which cleaves a tetradecapeptide from the amino end of the heavy chain; this reaction, which occurs at the surface of endothelial cells, is strongly promoted by thrombomodulin. Post-translationally, the vitamin K-dependent, enzymatic carboxylation of some Glu residues allows the modified protein to bind calcium. The iron and 2-oxoglutarate dependent 3-hydroxylation of aspartate and asparagine is (R) stereospecific within EGF domains. Plasma; synthesized in the liver.

Its subcellular location is the secreted. It is found in the golgi apparatus. It localises to the endoplasmic reticulum. The enzyme catalyses Degradation of blood coagulation factors Va and VIIIa.. Its function is as follows. Protein C is a vitamin K-dependent serine protease that regulates blood coagulation by inactivating factors Va and VIIIa in the presence of calcium ions and phospholipids. Exerts a protective effect on the endothelial cell barrier function. This chain is Vitamin K-dependent protein C (Proc), found in Rattus norvegicus (Rat).